Reading from the N-terminus, the 196-residue chain is Pro-FMRFamide-related neuropeptide VF (196 aa).

Positions 1-21 are cleaved as a signal peptide; that stretch reads MEIISLKRFILLMLATSSLLT. The propeptide occupies 22-57; the sequence is SNIFCTDESRMPNLYSKKNYDKYSEPRGDLGWEKER. F92 is subject to Phenylalanine amide. 2 consecutive propeptides follow at residues 95–99 and 115–121; these read NMEEE and NREDSLS. Phenylalanine amide is present on F131. A propeptide spanning residues 134-196 is cleaved from the precursor; sequence TTTAKSITKT…IDDAELKQEK (63 aa).

Belongs to the FARP (FMRFamide related peptide) family.

Its subcellular location is the secreted. Efficiently inhibits forskolin-induced production of cAMP. Acts as a potent negative regulator of gonadotropin synthesis and secretion. Induces secretion of prolactin. Functionally, efficiently inhibits forskolin-induced production of cAMP. Blocks morphine-induced analgesia. Its function is as follows. Shows no inhibitory activity of forskolin-induced production of cAMP. In Bos taurus (Bovine), this protein is Pro-FMRFamide-related neuropeptide VF (NPVF).